The following is a 402-amino-acid chain: Argininosuccinate synthase (402 aa).

Residues 10–18 and Ala-38 contribute to the ATP site; that span reads AYSGGLDTS. L-citrulline is bound at residue Tyr-90. Gly-120 contacts ATP. Residues Thr-122, Asn-126, and Asp-127 each coordinate L-aspartate. Asn-126 lines the L-citrulline pocket. L-citrulline contacts are provided by Arg-130, Ser-179, Ser-188, Glu-264, and Tyr-276.

Belongs to the argininosuccinate synthase family. Type 1 subfamily. As to quaternary structure, homotetramer.

The protein resides in the cytoplasm. It carries out the reaction L-citrulline + L-aspartate + ATP = 2-(N(omega)-L-arginino)succinate + AMP + diphosphate + H(+). Its pathway is amino-acid biosynthesis; L-arginine biosynthesis; L-arginine from L-ornithine and carbamoyl phosphate: step 2/3. This Psychromonas ingrahamii (strain DSM 17664 / CCUG 51855 / 37) protein is Argininosuccinate synthase.